We begin with the raw amino-acid sequence, 104 residues long: Co-chaperonin GroES (104 aa).

This sequence belongs to the GroES chaperonin family. In terms of assembly, heptamer of 7 subunits arranged in a ring. Interacts with the chaperonin GroEL.

The protein resides in the cytoplasm. Its function is as follows. Together with the chaperonin GroEL, plays an essential role in assisting protein folding. The GroEL-GroES system forms a nano-cage that allows encapsulation of the non-native substrate proteins and provides a physical environment optimized to promote and accelerate protein folding. GroES binds to the apical surface of the GroEL ring, thereby capping the opening of the GroEL channel. This is Co-chaperonin GroES from Acidiphilium cryptum (strain JF-5).